Reading from the N-terminus, the 489-residue chain is Putative ABC transporter ATP-binding protein TDE_0282 (489 aa).

2 ABC transporter domains span residues 2–241 and 269–487; these read ITLR…SMKL and FAVK…MQLE. Residues 36-43 and 301-308 each bind ATP; these read GASGCGKT and GENGAGKT.

Belongs to the ABC transporter superfamily.

The protein resides in the cell inner membrane. Probably part of an ABC transporter complex. Responsible for energy coupling to the transport system. This chain is Putative ABC transporter ATP-binding protein TDE_0282, found in Treponema denticola (strain ATCC 35405 / DSM 14222 / CIP 103919 / JCM 8153 / KCTC 15104).